We begin with the raw amino-acid sequence, 89 residues long: OMEGA-ectatommitoxin(02)-Rm1b (89 aa).

The N-terminal stretch at 1-30 is a signal peptide; sequence MKDSYISIVIAYLMVTFILVSSMPIEGEKG. 3 cysteine pairs are disulfide-bonded: Cys-39-Cys-52, Cys-47-Cys-68, and Cys-70-Cys-79. An EGF-like domain is found at 43–80; sequence YANYCFNGKCVHFVAQDEPGKPCYSCICDKFYIGKRCG.

It belongs to the EGF domain peptide family. As to expression, expressed by the venom gland.

It localises to the secreted. Its function is as follows. Ant peptide with probable defensive activity which acts as a potent agonist of the mammalian epidermal growth factor receptor (EGFR). Mimics, both structurally and functionally, vertebrate epidermal growth factor (EGF) peptide hormones. In vivo, intraplantar injection in mice causes long-lasting (several days) hypersensitivity of the injected paw to both mechanical and thermal stimuli. Its long-lasting effect is unusual for venom toxins whose effects are usually immediate. One possible explanation is that it would reduce the duration of a nest attack, discourage future attacks, or enhance the actions of subsequent exposure to other pain-inducing venom peptides. The chain is OMEGA-ectatommitoxin(02)-Rm1b from Rhytidoponera metallica (Australian green-headed ant).